The following is a 327-amino-acid chain: Phenylalanine--tRNA ligase alpha subunit (327 aa).

Glu252 serves as a coordination point for Mg(2+).

It belongs to the class-II aminoacyl-tRNA synthetase family. Phe-tRNA synthetase alpha subunit type 1 subfamily. In terms of assembly, tetramer of two alpha and two beta subunits. Mg(2+) serves as cofactor.

The protein localises to the cytoplasm. It catalyses the reaction tRNA(Phe) + L-phenylalanine + ATP = L-phenylalanyl-tRNA(Phe) + AMP + diphosphate + H(+). This chain is Phenylalanine--tRNA ligase alpha subunit, found in Pectobacterium atrosepticum (strain SCRI 1043 / ATCC BAA-672) (Erwinia carotovora subsp. atroseptica).